Here is a 421-residue protein sequence, read N- to C-terminus: Signal recognition particle receptor FtsY (421 aa).

Basic residues predominate over residues 1–10; that stretch reads MFSFFRRKKK. The tract at residues 1–31 is disordered; sequence MFSFFRRKKKQETPALEEAQIQETAAKAESE. GTP-binding positions include 228 to 235, 309 to 313, and 373 to 376; these read GINGAGKT, DTAGR, and TKLD.

Belongs to the GTP-binding SRP family. FtsY subfamily. In terms of assembly, part of the signal recognition particle protein translocation system, which is composed of SRP and FtsY. SRP is a ribonucleoprotein composed of Ffh and a 4.5S RNA molecule.

The protein localises to the cell inner membrane. The protein resides in the cytoplasm. It carries out the reaction GTP + H2O = GDP + phosphate + H(+). In terms of biological role, involved in targeting and insertion of nascent membrane proteins into the cytoplasmic membrane. Acts as a receptor for the complex formed by the signal recognition particle (SRP) and the ribosome-nascent chain (RNC). Interaction with SRP-RNC leads to the transfer of the RNC complex to the Sec translocase for insertion into the membrane, the hydrolysis of GTP by both Ffh and FtsY, and the dissociation of the SRP-FtsY complex into the individual components. This Neisseria meningitidis serogroup A / serotype 4A (strain DSM 15465 / Z2491) protein is Signal recognition particle receptor FtsY.